The primary structure comprises 217 residues: Carbon disulfide hydrolase (217 aa).

Positions 39, 98, and 101 each coordinate Zn(2+). Positions Asp192–Lys217 are disordered.

This sequence belongs to the beta-class carbonic anhydrase family. As to quaternary structure, forms only homooctamers in solution. Zn(2+) serves as cofactor.

The catalysed reaction is carbon disulfide + 2 H2O = 2 hydrogen sulfide + CO2 + 2 H(+). It participates in sulfur metabolism; hydrogen sulfide biosynthesis. Functionally, catalyzes the conversion of carbon disulfide into hydrogen sulfide and carbon dioxide, with carbonyl sulfide as an intermediate. Likely plays a key role in sulfur metabolism that allows A.thiooxidans S1p to grow on carbon disulfide as the main carbon and energy source. Does not show carbonic anhydrase activity (hydration of CO(2) to carbonate). In Acidithiobacillus thiooxidans (Thiobacillus thiooxidans), this protein is Carbon disulfide hydrolase.